Here is a 189-residue protein sequence, read N- to C-terminus: dCTP deaminase (189 aa).

Residues 112–117 (KSTYAR), 136–138 (TLE), Gln157, Tyr171, and Gln181 each bind dCTP. Glu138 acts as the Proton donor/acceptor in catalysis.

The protein belongs to the dCTP deaminase family. Homotrimer.

The enzyme catalyses dCTP + H2O + H(+) = dUTP + NH4(+). It participates in pyrimidine metabolism; dUMP biosynthesis; dUMP from dCTP (dUTP route): step 1/2. In terms of biological role, catalyzes the deamination of dCTP to dUTP. The chain is dCTP deaminase from Xanthomonas euvesicatoria pv. vesicatoria (strain 85-10) (Xanthomonas campestris pv. vesicatoria).